Here is a 944-residue protein sequence, read N- to C-terminus: Nonsense-mediated mRNA decay factor SMG8 (944 aa).

2 disordered regions span residues 559–601 (LNNG…SNCC) and 629–654 (ASSE…TDNE). The span at 568 to 589 (QDEDAEEDEAEEEEGQEQEQPT) shows a compositional bias: acidic residues. Polar residues predominate over residues 629-640 (ASSEQLLNSEQN). The span at 641 to 650 (TTSSGTSSAD) shows a compositional bias: low complexity.

This sequence belongs to the SMG8 family.

Its function is as follows. Involved in nonsense-mediated decay (NMD) of mRNAs containing premature stop codons. Probable component of kinase complex containing nonC and recruited to stalled ribosomes. In Drosophila melanogaster (Fruit fly), this protein is Nonsense-mediated mRNA decay factor SMG8.